A 339-amino-acid chain; its full sequence is UPF0324 membrane protein SpyM3_0740 (339 aa).

9 helical membrane passes run 7 to 24 (KLPG…AWYL), 28 to 50 (FPII…FYHH), 57 to 79 (GISF…GLNL), 84 to 106 (AVGM…VAYG), 118 to 140 (ATLV…APVI), 150 to 172 (AISV…GQLL), 256 to 275 (FILF…SLGV), 290 to 307 (FIVM…LVKL), and 314 to 336 (AILL…QLSL).

Belongs to the UPF0324 family.

Its subcellular location is the cell membrane. In Streptococcus pyogenes serotype M3 (strain ATCC BAA-595 / MGAS315), this protein is UPF0324 membrane protein SpyM3_0740.